Reading from the N-terminus, the 66-residue chain is Phylloseptin-S1 (66 aa).

Residues 1 to 22 (MAFLKKSLFLVLFLGLVSLSIC) form the signal peptide. Residues 23–46 (EEEKRETEEEEHDQEEDDKSEEKR) constitute a propeptide that is removed on maturation. The segment at 25–44 (EKRETEEEEHDQEEDDKSEE) is disordered. Positions 30-41 (EEEEHDQEEDDK) are enriched in acidic residues. F65 carries the post-translational modification Phenylalanine amide.

As to expression, expressed by the skin glands.

It localises to the secreted. Its subcellular location is the target cell membrane. In terms of biological role, antimicrobial peptide with high activity against Gram-positive bacteria, low activity against Gram-negative bacteria, and moderate activity against fungi. Acts on bacterial biofilms (S.aureus) with the same potency than on bacteria. Acts by causing bacterial membrane disruption inducing leakage of the intracellular content followed by cell death. It adopts an alpha-helical amphipathic structure in membrane environments. Also shows highly potent antiparasitic activity against Leishmania species. Shows low hemolytic activity on horse and human erythrocytes (LC(50)=39 uM). Is also active on human monocytes (IC(50)=23 uM). The chain is Phylloseptin-S1 from Phyllomedusa sauvagei (Sauvage's leaf frog).